Here is a 1746-residue protein sequence, read N- to C-terminus: Tenascin (1746 aa).

A signal peptide spans 1 to 22 (MGVVTRLLVGTFLASLALPAQG). Residues 23–185 (GVLKKVIRHK…CEPGWKGPNC (163 aa)) form an involved in hexamer formation region. N-linked (GlcNAc...) asparagine glycosylation is present at Asn-38. Phosphoserine occurs at positions 65, 70, and 72. O-linked (Xyl...) (chondroitin sulfate) serine glycosylation is present at Ser-72. A coiled-coil region spans residues 118–145 (DVKELLSRLEELENLVSSLREQCTSGAG). Residues Asn-166 and Asn-184 are each glycosylated (N-linked (GlcNAc...) asparagine). Residues 174-186 (CVCEPGWKGPNCS) enclose the EGF-like 1; incomplete domain. EGF-like domains are found at residues 187–217 (EPECPSNCHLRGQCVDGQCVCNEGFTGEDCS), 218–249 (QLACPSDCNDQGKCVNGVCVCFEGYSGVDCSR), 250–280 (ETCPVPCSEEHGRCVDGRCVCQEGFAGEDCN), 281–311 (EPLCLHNCHGRGRCVENECVCDEGFTGEDCG), 312–342 (ELICPKDCFDRGRCINGTCYCDEGFEGEDCG), 343–373 (RLACPHGCRGRGRCEEGQCVCDEGFAGADCS), 374–404 (ERRCPSDCHNRGRCLDGRCECDDGFEGEDCG), 405–435 (ELRCPGGCSGHGRCVNGQCVCDEGRTGEDCS), 436–466 (QLRCPNDCHGRGRCVQGRCECEHGFQGYDCS), 467–497 (EMSCPHDCHQHGRCVNGMCVCDDGYTGEDCR), 498–528 (ELRCPGDCSQRGRCVDGRCVCEHGFAGPDCA), 529–559 (DLACPSDCHGRGRCVNGQCVCHEGFTGKDCG), 560–589 (QRRCPGDCHGQGRCVDGQCVCHEGFTGLDC), and 590–620 (GQRSCPNDCSNWGQCVSGRCICNEGYSGEDC). 42 disulfide bridges follow: Cys-190/Cys-200, Cys-194/Cys-205, Cys-207/Cys-216, Cys-221/Cys-231, Cys-225/Cys-236, Cys-238/Cys-247, Cys-252/Cys-263, Cys-256/Cys-268, Cys-270/Cys-279, Cys-284/Cys-294, Cys-288/Cys-299, Cys-301/Cys-310, Cys-315/Cys-325, Cys-319/Cys-330, Cys-332/Cys-341, Cys-346/Cys-356, Cys-350/Cys-361, Cys-363/Cys-372, Cys-377/Cys-387, Cys-381/Cys-392, Cys-394/Cys-403, Cys-408/Cys-418, Cys-412/Cys-423, Cys-425/Cys-434, Cys-439/Cys-449, Cys-443/Cys-454, Cys-456/Cys-465, Cys-470/Cys-480, Cys-474/Cys-485, Cys-487/Cys-496, Cys-501/Cys-511, Cys-505/Cys-516, Cys-518/Cys-527, Cys-532/Cys-542, Cys-536/Cys-547, Cys-549/Cys-558, Cys-563/Cys-573, Cys-567/Cys-578, Cys-580/Cys-589, Cys-594/Cys-604, Cys-598/Cys-609, and Cys-611/Cys-620. An N-linked (GlcNAc...) asparagine glycan is attached at Asn-327. Fibronectin type-III domains lie at 625 to 717 (PPKD…TPEG), 718 to 801 (LKFK…VTTT), 805 to 894 (APSQ…TGLD), 895 to 988 (APRN…LDPP), 989 to 1075 (KDFR…AGEP), 1076 to 1166 (EIGN…EAEP), 1167 to 1256 (EVDN…TAMG), 1257 to 1346 (SPKE…ALDG), 1347 to 1433 (PSGL…TDLD), and 1434 to 1522 (SPRD…IGLL). N-linked (GlcNAc...) asparagine glycosylation occurs at Asn-788. Phosphothreonine is present on Thr-905. N-linked (GlcNAc...) asparagine glycosylation is found at Asn-1034, Asn-1079, and Asn-1121. An N-linked (GlcNAc...) asparagine glycan is attached at Asn-1354. Positions 1520 to 1735 (GLLYPFPRDC…FAEMKLRPSN (216 aa)) constitute a Fibrinogen C-terminal domain.

This sequence belongs to the tenascin family. Homohexamer; disulfide-linked. A homotrimer may be formed in the triple coiled-coil region and may be stabilized by disulfide rings at both ends. Two of such half-hexabrachions may be disulfide linked within the central globule. Interacts with CSPG4. Interacts (via the 3rd fibronectin type-III domain) with integrin ITGA9:ITGB1. As to expression, submaxillary glands and brain.

Its subcellular location is the secreted. It is found in the extracellular space. The protein localises to the extracellular matrix. Its function is as follows. Extracellular matrix protein implicated in guidance of migrating neurons as well as axons during development, synaptic plasticity as well as neuronal regeneration. Promotes neurite outgrowth from cortical neurons grown on a monolayer of astrocytes. Ligand for integrins alpha-8/beta-1, alpha-9/beta-1, alpha-V/beta-3 and alpha-V/beta-6. In tumors, stimulates angiogenesis by elongation, migration and sprouting of endothelial cells. In Sus scrofa (Pig), this protein is Tenascin (TNC).